Reading from the N-terminus, the 381-residue chain is Selenoprotein P (381 aa).

The first 19 residues, 1 to 19 (MWRSLGLALALCLLPSGGT), serve as a signal peptide directing secretion. An N-linked (GlcNAc...) asparagine glycan is attached at Asn46. Position 59 (Sec59) is a non-standard amino acid, selenocysteine. The N-linked (GlcNAc...) (complex) asparagine glycan is linked to Asn83. 3 N-linked (GlcNAc...) asparagine glycosylation sites follow: Asn119, Asn128, and Asn174. The tract at residues 200–268 (TPSPHYHHEH…ENRDMPASED (69 aa)) is disordered. Residues 204 to 216 (HYHHEHHHNHGHQ) are compositionally biased toward basic residues. Polar residues predominate over residues 218-230 (LGSSELSENQQPG). Residues 243–255 (LHHHHKHKGQHRQ) are compositionally biased toward basic residues. Phosphoserine is present on Ser266. Non-standard amino acids (selenocysteine) are located at Sec300, Sec318, and Sec330. Asn338 carries N-linked (GlcNAc...) asparagine glycosylation. 6 non-standard amino acids (selenocysteine) are found at residues Sec345, Sec352, Sec367, Sec369, Sec376, and Sec378. The interval 355 to 381 (SQQLIPTEASASURUKNQAKKUEUPSN) is disordered.

The protein belongs to the selenoprotein P family. Post-translationally, phosphorylation sites are present in the extracellular medium. In terms of tissue distribution, made in the liver and heart and secreted into the plasma. It is also found in the kidney.

It is found in the secreted. Functionally, might be responsible for some of the extracellular antioxidant defense properties of selenium or might be involved in the transport of selenium. May supply selenium to tissues such as brain and testis. This chain is Selenoprotein P, found in Homo sapiens (Human).